The following is a 517-amino-acid chain: Quinol oxidase subunit 1 (517 aa).

The next 12 helical transmembrane spans lie at 19-39, 64-84, 98-118, 150-170, 185-205, 226-246, 271-291, 303-323, 333-353, 369-389, 412-432, and 460-480; these read VVWL…IAAM, IHGW…VIGF, QMAI…AGSP, MAYL…VTLI, IFAA…PALA, WAIL…FPLF, IYLL…TWPL, TLIL…TIFT, VGMG…QALV, VVGH…TTVF, IGMI…SVAG, and IGIP…LAYA. Histidine 65 lines the Fe(II)-heme a pocket. Cu cation contacts are provided by histidine 235, tyrosine 239, histidine 284, and histidine 285. The 1'-histidyl-3'-tyrosine (His-Tyr) cross-link spans 235–239; it reads HPVVY. Histidine 372 provides a ligand contact to heme a3. Histidine 374 is a binding site for Fe(II)-heme a.

This sequence belongs to the heme-copper respiratory oxidase family.

The protein localises to the cell membrane. The enzyme catalyses 2 a quinol + O2 = 2 a quinone + 2 H2O. Catalyzes the reduction of oxygen to water. Functionally, subunits I, II and III form the functional core of the enzyme complex. Electrons originating in caldariella quinol are transferred to the binuclear center formed by heme A3 and Cu(B). Its function is as follows. Subunit I binds heme a and the bimetallic center. In Sulfolobus acidocaldarius (strain ATCC 33909 / DSM 639 / JCM 8929 / NBRC 15157 / NCIMB 11770), this protein is Quinol oxidase subunit 1 (soxB).